A 412-amino-acid chain; its full sequence is Inositol polyphosphate-5-phosphatase A (412 aa).

A lipid anchor (S-farnesyl cysteine) is attached at Cys-409. A propeptide spans 410–412 (VVQ) (removed in mature form).

This sequence belongs to the inositol 1,4,5-trisphosphate 5-phosphatase type I family. Interacts with TASOR. In terms of processing, isoprenylation at Cys-409 is required for localization at the membrane. Expressed at high levels in cerebellar Purkinje cells (at protein level). Expressed in Sertoli cells of the testis.

The protein localises to the cell membrane. It localises to the cell projection. It is found in the dendrite. It catalyses the reaction 1D-myo-inositol 1,4,5-trisphosphate + H2O = 1D-myo-inositol 1,4-bisphosphate + phosphate. The catalysed reaction is 1D-myo-inositol 1,3,4,5-tetrakisphosphate + H2O = 1D-myo-inositol 1,3,4-trisphosphate + phosphate. Functionally, phosphatase that specifically hydrolyzes the 5-phosphate of inositol 1,4,5-trisphosphate to inositol 1,4-bisphosphate, and inositol 1,3,4,5-tetrasphosphate to inositol 1,3,4-trisphosphate. Plays a crucial role in the survival of cerebellar Purkinje cells. In Mus musculus (Mouse), this protein is Inositol polyphosphate-5-phosphatase A (Inpp5a).